The chain runs to 190 residues: A-type ATP synthase subunit E (190 aa).

This sequence belongs to the V-ATPase E subunit family. Has multiple subunits with at least A(3), B(3), C, D, E, F, H, I and proteolipid K(x).

The protein localises to the cell membrane. Functionally, component of the A-type ATP synthase that produces ATP from ADP in the presence of a proton gradient across the membrane. The protein is A-type ATP synthase subunit E of Pyrobaculum islandicum (strain DSM 4184 / JCM 9189 / GEO3).